The chain runs to 360 residues: Probable L-asparaginase 3 (360 aa).

The first 16 residues, M1–C16, serve as a signal peptide directing secretion. Residues N27, N35, and N40 are each glycosylated (N-linked (GlcNAc...) asparagine). The 321-residue stretch at P39–E359 folds into the Asparaginase/glutaminase domain. The O-isoaspartyl threonine intermediate role is filled by T49. An N-linked (GlcNAc...) asparagine glycan is attached at N82. S96 contributes to the substrate binding site. The N-linked (GlcNAc...) asparagine glycan is linked to N106. T129 to D130 provides a ligand contact to substrate. N-linked (GlcNAc...) asparagine glycosylation is found at N144, N179, N246, N302, and N351.

The protein belongs to the asparaginase 1 family.

The protein resides in the secreted. It localises to the cell wall. The catalysed reaction is L-asparagine + H2O = L-aspartate + NH4(+). In Schizosaccharomyces pombe (strain 972 / ATCC 24843) (Fission yeast), this protein is Probable L-asparaginase 3.